A 192-amino-acid chain; its full sequence is dTDP-4-amino-4,6-dideoxy-D-glucose acyltransferase (192 aa).

This sequence belongs to the transferase hexapeptide repeat family.

It catalyses the reaction dTDP-4-amino-4,6-dideoxy-alpha-D-glucose + acetyl-CoA = dTDP-4-acetamido-4,6-dideoxy-alpha-D-glucose + CoA + H(+). It participates in bacterial outer membrane biogenesis; lipopolysaccharide biosynthesis. Its function is as follows. Catalyzes the conversion of dTDP-4-amino-4,6-dideoxy-D-glucose (dTDP-D-Qui4N) to dTDP-4-acetamido-4,6-dideoxy-D-glucose (dTDP-D-Qui4NAc). This Escherichia coli protein is dTDP-4-amino-4,6-dideoxy-D-glucose acyltransferase (vioB).